A 262-amino-acid polypeptide reads, in one-letter code: ATP synthase subunit a (262 aa).

Helical transmembrane passes span 26-46 (VHID…FVFS), 86-106 (VAPL…IDLI), 130-150 (DISA…FYTI), 204-226 (LIFI…GIPL), and 240-260 (LQAF…YNKA).

It belongs to the ATPase A chain family. F-type ATPases have 2 components, CF(1) - the catalytic core - and CF(0) - the membrane proton channel. CF(1) has five subunits: alpha(3), beta(3), gamma(1), delta(1), epsilon(1). CF(0) has three main subunits: a(1), b(2) and c(9-12). The alpha and beta chains form an alternating ring which encloses part of the gamma chain. CF(1) is attached to CF(0) by a central stalk formed by the gamma and epsilon chains, while a peripheral stalk is formed by the delta and b chains.

It is found in the cell inner membrane. Its function is as follows. Key component of the proton channel; it plays a direct role in the translocation of protons across the membrane. This chain is ATP synthase subunit a, found in Haemophilus influenzae (strain PittEE).